The sequence spans 551 residues: E3 SUMO-protein ligase CBX4 (551 aa).

Residues 11–69 (FAVESIEKKRIRKGRVEYLVKWRGWSPKYNTWEPEENILDPRLLIAFQNRERQEQLMGY) form the Chromo domain. Residues Lys-77, Lys-106, Lys-114, and Lys-125 each participate in a glycyl lysine isopeptide (Lys-Gly) (interchain with G-Cter in SUMO2) cross-link. Positions 125–152 (KKHHQYQPHSKERSGKPPPPGKSGKYYY) are disordered. An N6-acetyllysine; alternate modification is found at Lys-149. Residue Lys-149 forms a Glycyl lysine isopeptide (Lys-Gly) (interchain with G-Cter in SUMO2); alternate linkage. Glycyl lysine isopeptide (Lys-Gly) (interchain with G-Cter in SUMO2) cross-links involve residues Lys-157, Lys-167, and Lys-178. The tract at residues 172–193 (QYQGGHKEAPSPTCPDLGTKSH) is disordered. Position 182 is a phosphoserine (Ser-182). Glycyl lysine isopeptide (Lys-Gly) (interchain with G-Cter in SUMO2) cross-links involve residues Lys-191, Lys-205, Lys-212, Lys-223, Lys-249, Lys-268, Lys-278, and Lys-280. The segment at 216-244 (GGAGAPGKGSEKGPPNGMTPAPKEAVTGN) is disordered. 3 stretches are compositionally biased toward basic and acidic residues: residues 281-291 (SGEAAEGEARS), 298-310 (AAEE…DRTF), and 317-332 (SEEK…REEE). 2 disordered regions span residues 281-399 (SGEA…TVGL) and 430-451 (TPTC…PTAA). Residues Lys-321, Lys-353, and Lys-366 each participate in a glycyl lysine isopeptide (Lys-Gly) (interchain with G-Cter in SUMO2) cross-link. Residues 381 to 396 (PAHHHHHHHHHHHHHT) show a composition bias toward basic residues. Ser-463 carries the phosphoserine modification. Lys-490 is covalently cross-linked (Glycyl lysine isopeptide (Lys-Gly) (interchain with G-Cter in SUMO2); alternate). Lys-490 is covalently cross-linked (Glycyl lysine isopeptide (Lys-Gly) (interchain with G-Cter in SUMO); alternate).

Interacts with SUV39H1 and HIPK2. Interacts with CSNK2B. Component of a PRC1-like complex. The composition of the PRC1 complex differs between the PRC1 complex in pluripotent embryonic stem cells containing RNF2, CBX7 and PCGF2, and the PRC1 complex in differentiating cells containing RNF2, CBX2, CBX4 and BMI1. Interacts with RNF2. Interacts (via chromodomain) with histone H3K9Me3 and single-stranded RNA (ssRNA). Interacts with CHTOP. May interact with H3C15 and H3C1. Interacts with PRDM1. In terms of processing, ubiquitinated. Ubiquitination regulates the function of the Polycomb group (PcG) multiprotein PRC1-like complex. Deubiquitinated by USP26. Expressed in embryoid bodies.

It is found in the nucleus. Its subcellular location is the nucleus speckle. It functions in the pathway protein modification; protein sumoylation. E3 SUMO-protein ligase that catalyzes sumoylation of target proteins by promoting the transfer of SUMO from the E2 enzyme to the substrate. Involved in the sumoylation of HNRNPK, a p53/TP53 transcriptional coactivator, hence indirectly regulates p53/TP53 transcriptional activation resulting in p21/CDKN1A expression. Its function is as follows. Component of a Polycomb group (PcG) multiprotein PRC1-like complex, a complex class required to maintain the transcriptionally repressive state of many genes, including Hox genes, throughout development. PcG PRC1 complex acts via chromatin remodeling and modification of histones; it mediates monoubiquitination of histone H2A 'Lys-119', rendering chromatin heritably changed in its expressibility. Binds to histone H3 trimethylated at 'Lys-9' (H3K9me3). Plays a role in the lineage differentiation of the germ layers in embryonic development. The chain is E3 SUMO-protein ligase CBX4 (Cbx4) from Mus musculus (Mouse).